Reading from the N-terminus, the 421-residue chain is Trimethyllysine dioxygenase, mitochondrial (421 aa).

Residues 1 to 15 (MWYHKLLHQQSRLRN) constitute a mitochondrion transit peptide. Residues lysine 179 and lysine 236 each carry the N6-acetyllysine modification. Positions 242, 244, and 389 each coordinate Fe cation.

Belongs to the gamma-BBH/TMLD family. As to quaternary structure, homodimer. Fe(2+) is required as a cofactor. L-ascorbate serves as cofactor.

The protein localises to the mitochondrion matrix. It catalyses the reaction N(6),N(6),N(6)-trimethyl-L-lysine + 2-oxoglutarate + O2 = (3S)-3-hydroxy-N(6),N(6),N(6)-trimethyl-L-lysine + succinate + CO2. It participates in amine and polyamine biosynthesis; carnitine biosynthesis. Its function is as follows. Converts trimethyllysine (TML) into hydroxytrimethyllysine (HTML). This chain is Trimethyllysine dioxygenase, mitochondrial (Tmlhe), found in Mus musculus (Mouse).